A 429-amino-acid polypeptide reads, in one-letter code: Enolase (429 aa).

A (2R)-2-phosphoglycerate-binding site is contributed by Gln163. Glu205 functions as the Proton donor in the catalytic mechanism. Residues Asp242, Glu287, and Asp314 each contribute to the Mg(2+) site. 4 residues coordinate (2R)-2-phosphoglycerate: Lys339, Arg368, Ser369, and Lys390. Residue Lys339 is the Proton acceptor of the active site.

The protein belongs to the enolase family. The cofactor is Mg(2+).

Its subcellular location is the cytoplasm. The protein localises to the secreted. It localises to the cell surface. It carries out the reaction (2R)-2-phosphoglycerate = phosphoenolpyruvate + H2O. The protein operates within carbohydrate degradation; glycolysis; pyruvate from D-glyceraldehyde 3-phosphate: step 4/5. Catalyzes the reversible conversion of 2-phosphoglycerate (2-PG) into phosphoenolpyruvate (PEP). It is essential for the degradation of carbohydrates via glycolysis. In Anaeromyxobacter dehalogenans (strain 2CP-C), this protein is Enolase.